The sequence spans 412 residues: NADH-quinone oxidoreductase subunit D (412 aa).

It belongs to the complex I 49 kDa subunit family. NDH-1 is composed of 14 different subunits. Subunits NuoB, C, D, E, F, and G constitute the peripheral sector of the complex.

The protein resides in the cell inner membrane. The catalysed reaction is a quinone + NADH + 5 H(+)(in) = a quinol + NAD(+) + 4 H(+)(out). In terms of biological role, NDH-1 shuttles electrons from NADH, via FMN and iron-sulfur (Fe-S) centers, to quinones in the respiratory chain. The immediate electron acceptor for the enzyme in this species is believed to be a menaquinone. Couples the redox reaction to proton translocation (for every two electrons transferred, four hydrogen ions are translocated across the cytoplasmic membrane), and thus conserves the redox energy in a proton gradient. This is NADH-quinone oxidoreductase subunit D from Flavobacterium johnsoniae (strain ATCC 17061 / DSM 2064 / JCM 8514 / BCRC 14874 / CCUG 350202 / NBRC 14942 / NCIMB 11054 / UW101) (Cytophaga johnsonae).